Consider the following 306-residue polypeptide: Homoserine O-acetyltransferase (306 aa).

Cys142 (acyl-thioester intermediate) is an active-site residue. Substrate contacts are provided by Lys163 and Ser194. The Proton acceptor role is filled by His237. Glu239 is a catalytic residue. Residue Arg251 participates in substrate binding.

The protein belongs to the MetA family.

It localises to the cytoplasm. The enzyme catalyses L-homoserine + acetyl-CoA = O-acetyl-L-homoserine + CoA. It participates in amino-acid biosynthesis; L-methionine biosynthesis via de novo pathway; O-acetyl-L-homoserine from L-homoserine: step 1/1. Transfers an acetyl group from acetyl-CoA to L-homoserine, forming acetyl-L-homoserine. In Clostridium tetani (strain Massachusetts / E88), this protein is Homoserine O-acetyltransferase.